The following is a 450-amino-acid chain: Sorting nexin-4 (450 aa).

Position 1 is an N-acetylmethionine (methionine 1). The interval 1–46 (MEQAPPDPEKLLQPGPLEPLGGPGAVLEAAVGEENEGTREDGSGVD) is disordered. A compositionally biased stretch (low complexity) spans 11–20 (LLQPGPLEPL). The PX domain maps to 61–187 (SVSEAEKRTG…YSFLTQEGNW (127 aa)). The a 1,2-diacyl-sn-glycero-3-phospho-(1D-myo-inositol-3-phosphate) site is built by arginine 106, serine 108, lysine 132, and arginine 154.

The protein belongs to the sorting nexin family. Heterodimer; heterodimerizes with SNX7 or SNX30. Interacts with WWC1/KIBRA. Identified in a complex with WWC1/KIBRA and dynein components DYNLL1 and DYNC1I2. Interacts with BIN1.

The protein localises to the early endosome. It is found in the early endosome membrane. In terms of biological role, involved in the regulation of endocytosis and in several stages of intracellular trafficking. Plays a role in recycling endocytosed transferrin receptor and prevent its degradation. Involved in autophagosome assembly by regulating trafficking and recycling of phospholipid scramblase ATG9A. The protein is Sorting nexin-4 of Mus musculus (Mouse).